Here is a 506-residue protein sequence, read N- to C-terminus: (+)-piperitol/(+)-sesamin synthase CYP81Q2 (506 aa).

Residues 3–23 form a helical membrane-spanning segment; sequence AEMLYSALALTFAIFMVYRIL. Residue C439 coordinates heme.

Belongs to the cytochrome P450 family. Heme serves as cofactor. In terms of tissue distribution, expressed in seeds.

The protein resides in the membrane. It catalyses the reaction (+)-piperitol + reduced [NADPH--hemoprotein reductase] + O2 = (+)-sesamin + oxidized [NADPH--hemoprotein reductase] + 2 H2O + H(+). It carries out the reaction (+)-pinoresinol + reduced [NADPH--hemoprotein reductase] + O2 = (+)-piperitol + oxidized [NADPH--hemoprotein reductase] + 2 H2O + H(+). Functionally, involved in the biosynthesis of (+)-sesamin, a furofuran class lignan. Functions in a dual catalytic mode. Catalyzes the synthesis of (+)-sesamin from (+)- pinoresinol by formation of two successive methylenedioxy bridges on (+)-pinoresinol and (+)-piperitol, respectively. The chain is (+)-piperitol/(+)-sesamin synthase CYP81Q2 from Sesamum radiatum (Black benniseed).